Reading from the N-terminus, the 281-residue chain is GPN-loop GTPase 3 (281 aa).

GTP is bound at residue glycine 13–threonine 18. The short motif at glycine 70–asparagine 72 is the Gly-Pro-Asn (GPN)-loop; involved in dimer interface element. Serine 173 to aspartate 176 serves as a coordination point for GTP. Positions valine 259–glutamine 281 are disordered.

This sequence belongs to the GPN-loop GTPase family. Heterodimers with GPN1 or GPN2. Binds to RNA polymerase II (RNAPII).

Small GTPase required for proper nuclear import of RNA polymerase II and III (RNAPII and RNAPIII). May act at an RNAP assembly step prior to nuclear import. The chain is GPN-loop GTPase 3 from Mycosarcoma maydis (Corn smut fungus).